Here is a 321-residue protein sequence, read N- to C-terminus: Urease accessory protein UreD (321 aa).

It belongs to the UreD family. In terms of assembly, ureD, UreF and UreG form a complex that acts as a GTP-hydrolysis-dependent molecular chaperone, activating the urease apoprotein by helping to assemble the nickel containing metallocenter of UreC. The UreE protein probably delivers the nickel.

Its subcellular location is the cytoplasm. In terms of biological role, required for maturation of urease via the functional incorporation of the urease nickel metallocenter. The protein is Urease accessory protein UreD of Yersinia pseudotuberculosis serotype O:1b (strain IP 31758).